Consider the following 427-residue polypeptide: Cyclic 2,3-diphosphoglycerate synthetase (427 aa).

This sequence belongs to the cyclic 2,3-diphosphoglycerate synthetase family.

Its subcellular location is the cytoplasm. It catalyses the reaction (2R)-2,3-bisphosphoglycerate + ATP + H(+) = cyclic (2R)-2,3-bisphosphoglycerate + ADP + phosphate. In terms of biological role, catalyzes the formation of cyclic 2,3-diphosphoglycerate (cDPG) by formation of an intramolecular phosphoanhydride bond at the expense of ATP. This Pyrococcus abyssi (strain GE5 / Orsay) protein is Cyclic 2,3-diphosphoglycerate synthetase.